Here is a 174-residue protein sequence, read N- to C-terminus: 3-hydroxydecanoyl-[acyl-carrier-protein] dehydratase (174 aa).

H73 is a catalytic residue.

This sequence belongs to the thioester dehydratase family. FabA subfamily. As to quaternary structure, homodimer.

The protein resides in the cytoplasm. It carries out the reaction a (3R)-hydroxyacyl-[ACP] = a (2E)-enoyl-[ACP] + H2O. It catalyses the reaction (3R)-hydroxydecanoyl-[ACP] = (2E)-decenoyl-[ACP] + H2O. The catalysed reaction is (2E)-decenoyl-[ACP] = (3Z)-decenoyl-[ACP]. It participates in lipid metabolism; fatty acid biosynthesis. In terms of biological role, necessary for the introduction of cis unsaturation into fatty acids. Catalyzes the dehydration of (3R)-3-hydroxydecanoyl-ACP to E-(2)-decenoyl-ACP and then its isomerization to Z-(3)-decenoyl-ACP. Can catalyze the dehydratase reaction for beta-hydroxyacyl-ACPs with saturated chain lengths up to 16:0, being most active on intermediate chain length. The sequence is that of 3-hydroxydecanoyl-[acyl-carrier-protein] dehydratase from Cellvibrio japonicus (strain Ueda107) (Pseudomonas fluorescens subsp. cellulosa).